The following is a 134-amino-acid chain: MTNIRKSHPLFKIINDSFIDLPTPSSISSWWNFGSLLGVCLATQILTGLFLAMHYTSDTDTAFHSVTHICRDVNYGWILRYLHANGASMFFICLFLHVGRGIYYGSYTFSETWNIGIILLFAVMATAFMGYVLP.

3 helical membrane passes run 33–53 (FGSL…FLAM), 77–98 (WILR…FLHV), and 113–133 (WNIG…GYVL). Heme b-binding residues include histidine 83 and histidine 97.

The protein belongs to the cytochrome b family. As to quaternary structure, the cytochrome bc1 complex contains 11 subunits: 3 respiratory subunits (MT-CYB, CYC1 and UQCRFS1), 2 core proteins (UQCRC1 and UQCRC2) and 6 low-molecular weight proteins (UQCRH/QCR6, UQCRB/QCR7, UQCRQ/QCR8, UQCR10/QCR9, UQCR11/QCR10 and a cleavage product of UQCRFS1). This cytochrome bc1 complex then forms a dimer. The cofactor is heme b.

It is found in the mitochondrion inner membrane. Its function is as follows. Component of the ubiquinol-cytochrome c reductase complex (complex III or cytochrome b-c1 complex) that is part of the mitochondrial respiratory chain. The b-c1 complex mediates electron transfer from ubiquinol to cytochrome c. Contributes to the generation of a proton gradient across the mitochondrial membrane that is then used for ATP synthesis. In Rhinolophus hipposideros (Lesser horseshoe bat), this protein is Cytochrome b (MT-CYB).